The following is a 70-amino-acid chain: DNA gyrase inhibitor YacG (70 aa).

Residues C7, C10, C26, and C30 each coordinate Zn(2+).

This sequence belongs to the DNA gyrase inhibitor YacG family. As to quaternary structure, interacts with GyrB. It depends on Zn(2+) as a cofactor.

Functionally, inhibits all the catalytic activities of DNA gyrase by preventing its interaction with DNA. Acts by binding directly to the C-terminal domain of GyrB, which probably disrupts DNA binding by the gyrase. The polypeptide is DNA gyrase inhibitor YacG (Shewanella sediminis (strain HAW-EB3)).